The primary structure comprises 278 residues: MVRLPLKCLLWGCFLTAVHPEPPTSCKENQYPTNSRCCNLCPPGQKLVNHCTEVTETECLPCSSSEFLATWNREKHCHQHKYCDPNLGLQVQREGTSKTDTTCVCSEGHHCTNSACESCTLHSLCFPGLGVKQMATEVSDTICEPCPVGFFSNVSSASEKCQPWTSCESKGLVEQRAGTNKTDVVCGFQSRMRALVVIPITLGILFAVLLVFLCIRKVTKEQETKALHPKTERQDPVETIDLEDFPDSTAPVQETLHWCQPVTQEDGKESRISVQERE.

Positions 1–20 are cleaved as a signal peptide; sequence MVRLPLKCLLWGCFLTAVHP. Topologically, residues 21–194 are extracellular; sequence EPPTSCKENQ…VCGFQSRMRA (174 aa). 4 TNFR-Cys repeats span residues 25–60, 61–103, 104–144, and 145–187; these read SCKENQYPTNSRCCNLCPPGQKLVNHCTEVTETECL, PCSS…DTTC, VCSE…TICE, and PCPV…VVCG. 8 disulfide bridges follow: cysteine 26–cysteine 37, cysteine 38–cysteine 51, cysteine 41–cysteine 59, cysteine 62–cysteine 77, cysteine 83–cysteine 103, cysteine 105–cysteine 119, cysteine 111–cysteine 116, and cysteine 125–cysteine 143. Residues asparagine 153 and asparagine 180 are each glycosylated (N-linked (GlcNAc...) asparagine). The helical transmembrane segment at 195 to 215 threads the bilayer; the sequence is LVVIPITLGILFAVLLVFLCI. At 216 to 278 the chain is on the cytoplasmic side; the sequence is RKVTKEQETK…ESRISVQERE (63 aa).

As to quaternary structure, monomer and homodimer. Interacts with TRAF1, TRAF2, TRAF3, TRAF5 and TRAF6. Interacts with TRAF6 and MAP3K8; the interaction is required for ERK activation.

Its subcellular location is the membrane. Functionally, receptor for TNFSF5/CD40LG. Transduces TRAF6- and MAP3K8-mediated signals that activate ERK in macrophages and B cells, leading to induction of immunoglobulin secretion. The protein is Tumor necrosis factor receptor superfamily member 5 (CD40) of Sus scrofa (Pig).